The following is a 495-amino-acid chain: Serine/threonine-protein kinase F (495 aa).

The 269-residue stretch at 46 to 314 (YLPVKLLGQG…ASAEEVLAVL (269 aa)) folds into the Protein kinase domain. ATP contacts are provided by residues 52–60 (LGQGGFGAA) and Lys-77. Catalysis depends on Asp-187, which acts as the Proton acceptor. Residues 316–354 (GGKGNQGKAPPGATVSTPQGTNTQIQPTPASSASPLTAP) form a disordered region. Polar residues predominate over residues 329–350 (TVSTPQGTNTQIQPTPASSASP).

This sequence belongs to the protein kinase superfamily. Ser/Thr protein kinase family.

The catalysed reaction is L-seryl-[protein] + ATP = O-phospho-L-seryl-[protein] + ADP + H(+). The enzyme catalyses L-threonyl-[protein] + ATP = O-phospho-L-threonyl-[protein] + ADP + H(+). This is Serine/threonine-protein kinase F (spkF) from Synechocystis sp. (strain ATCC 27184 / PCC 6803 / Kazusa).